A 90-amino-acid polypeptide reads, in one-letter code: U7-theraphotoxin-Hhn1g (90 aa).

The first 19 residues, 1–19, serve as a signal peptide directing secretion; the sequence is MKTAIFTVVLALAVFAVLS. A propeptide spanning residues 20 to 50 is cleaved from the precursor; the sequence is FGWEANEKALSEEFTELIHEKEAASETEARE. Intrachain disulfides connect C51–C65, C58–C70, and C64–C81.

The protein belongs to the neurotoxin 10 (Hwtx-1) family. 13 (Hntx-13) subfamily. As to expression, expressed by the venom gland.

The protein localises to the secreted. In terms of biological role, ion channel inhibitor. The sequence is that of U7-theraphotoxin-Hhn1g from Cyriopagopus hainanus (Chinese bird spider).